A 336-amino-acid polypeptide reads, in one-letter code: Glycerol-3-phosphate dehydrogenase [NAD(P)+] (336 aa).

NADPH is bound by residues Ser-11, Trp-12, Arg-32, and Lys-109. The sn-glycerol 3-phosphate site is built by Lys-109, Gly-140, and Ser-142. Ala-144 lines the NADPH pocket. The sn-glycerol 3-phosphate site is built by Lys-195, Asp-248, Ser-258, Arg-259, and Asn-260. The active-site Proton acceptor is the Lys-195. Residue Arg-259 coordinates NADPH. 2 residues coordinate NADPH: Val-283 and Glu-285.

It belongs to the NAD-dependent glycerol-3-phosphate dehydrogenase family.

Its subcellular location is the cytoplasm. The catalysed reaction is sn-glycerol 3-phosphate + NAD(+) = dihydroxyacetone phosphate + NADH + H(+). The enzyme catalyses sn-glycerol 3-phosphate + NADP(+) = dihydroxyacetone phosphate + NADPH + H(+). It functions in the pathway membrane lipid metabolism; glycerophospholipid metabolism. Functionally, catalyzes the reduction of the glycolytic intermediate dihydroxyacetone phosphate (DHAP) to sn-glycerol 3-phosphate (G3P), the key precursor for phospholipid synthesis. The chain is Glycerol-3-phosphate dehydrogenase [NAD(P)+] from Leuconostoc mesenteroides subsp. mesenteroides (strain ATCC 8293 / DSM 20343 / BCRC 11652 / CCM 1803 / JCM 6124 / NCDO 523 / NBRC 100496 / NCIMB 8023 / NCTC 12954 / NRRL B-1118 / 37Y).